A 569-amino-acid polypeptide reads, in one-letter code: Dihydroxy-acid dehydratase (569 aa).

A [2Fe-2S] cluster-binding site is contributed by C61. Position 93 (D93) interacts with Mg(2+). C134 serves as a coordination point for [2Fe-2S] cluster. 2 residues coordinate Mg(2+): D135 and K136. Residue K136 is modified to N6-carboxylysine. Residue C211 coordinates [2Fe-2S] cluster. Mg(2+) is bound at residue E462. Catalysis depends on S488, which acts as the Proton acceptor.

This sequence belongs to the IlvD/Edd family. In terms of assembly, homodimer. [2Fe-2S] cluster is required as a cofactor. The cofactor is Mg(2+).

It catalyses the reaction (2R)-2,3-dihydroxy-3-methylbutanoate = 3-methyl-2-oxobutanoate + H2O. It carries out the reaction (2R,3R)-2,3-dihydroxy-3-methylpentanoate = (S)-3-methyl-2-oxopentanoate + H2O. It participates in amino-acid biosynthesis; L-isoleucine biosynthesis; L-isoleucine from 2-oxobutanoate: step 3/4. Its pathway is amino-acid biosynthesis; L-valine biosynthesis; L-valine from pyruvate: step 3/4. Functionally, functions in the biosynthesis of branched-chain amino acids. Catalyzes the dehydration of (2R,3R)-2,3-dihydroxy-3-methylpentanoate (2,3-dihydroxy-3-methylvalerate) into 2-oxo-3-methylpentanoate (2-oxo-3-methylvalerate) and of (2R)-2,3-dihydroxy-3-methylbutanoate (2,3-dihydroxyisovalerate) into 2-oxo-3-methylbutanoate (2-oxoisovalerate), the penultimate precursor to L-isoleucine and L-valine, respectively. This chain is Dihydroxy-acid dehydratase, found in Tropheryma whipplei (strain Twist) (Whipple's bacillus).